The chain runs to 291 residues: G1/S-specific cyclin-D1 (291 aa).

Thr-282 carries the post-translational modification Phosphothreonine.

Belongs to the cyclin family. Cyclin D subfamily. Interacts with the CDK4 and CDK6 protein kinases to form a serine/threonine kinase holoenzyme complex. The cyclin subunit imparts substrate specificity to the complex. Phosphorylation at Thr-282 by MAP kinases is required for ubiquitination and degradation by the DCX(AMBRA1) complex. Post-translationally, ubiquitinated by the DCX(AMBRA1) complex during the transition from G1 to S cell phase, leading to its degradation. The DCX(AMBRA1) complex represents the major regulator of CCND1 stability during the G1/S transition.

The protein resides in the nucleus. The protein localises to the cytoplasm. Its function is as follows. Regulatory component of the cyclin D1-CDK4 (DC) complex that phosphorylates and inhibits members of the retinoblastoma (RB) protein family including RB1 and regulates the cell-cycle during G(1)/S transition. Phosphorylation of RB1 allows dissociation of the transcription factor E2F from the RB/E2F complex and the subsequent transcription of E2F target genes which are responsible for the progression through the G(1) phase. Hypophosphorylates RB1 in early G(1) phase. Cyclin D-CDK4 complexes are major integrators of various mitogenenic and antimitogenic signals. This Danio rerio (Zebrafish) protein is G1/S-specific cyclin-D1 (ccnd1).